The sequence spans 312 residues: Olfactory receptor 2T8 (312 aa).

Residues 1 to 26 (MENGSYTSYFILLGLFNHTRAHQVLF) are Extracellular-facing. 2 N-linked (GlcNAc...) asparagine glycosylation sites follow: Asn-3 and Asn-17. The chain crosses the membrane as a helical span at residues 27 to 47 (MMVLSIVLTSLFGNSLMILLI). The Cytoplasmic portion of the chain corresponds to 48 to 55 (HWDHRLHT). A helical transmembrane segment spans residues 56-76 (PMYFLLSQLSLMDVMLVSTTV). The Extracellular segment spans residues 77 to 96 (PKMAADYLTGSKAISRAGCG). A disulfide bond links Cys-95 and Cys-177. A helical transmembrane segment spans residues 97 to 117 (AQIFFLPTLGGGECFLLAAMA). Topologically, residues 118-143 (YDRYAAVCHPLRYPTLMSWQLCLRMN) are cytoplasmic. A helical transmembrane segment spans residues 144–164 (LSCWLLGAADGLLQAVATLSF). The Extracellular segment spans residues 165 to 201 (PYCGAHEIDHFFCETPVLVRLACADTSVFENAMYICC). Residues 202-222 (VLMLLVPFSLILSSYGLILAA) traverse the membrane as a helical segment. At 223 to 234 (VLHMRSTEARKK) the chain is on the cytoplasmic side. Residues 235-255 (AFATCSSHVAVVGLFYGAAIF) form a helical membrane-spanning segment. Topologically, residues 256–269 (TYMRPKSHRSTNHD) are extracellular. A helical transmembrane segment spans residues 270–290 (KVVSAFYTMFTPLLNPLIYSV). The Cytoplasmic portion of the chain corresponds to 291-312 (KNSEVKGALTRCMGRCVALSRE).

Belongs to the G-protein coupled receptor 1 family.

It localises to the cell membrane. Its function is as follows. Odorant receptor. This chain is Olfactory receptor 2T8 (OR2T8), found in Homo sapiens (Human).